Reading from the N-terminus, the 392-residue chain is Probable tRNA sulfurtransferase (392 aa).

The THUMP domain maps to 59-167; it reads ADITDRVKKV…DQAFVFSNKI (109 aa). Residues 184–185, 209–210, R266, G288, and Q297 contribute to the ATP site; these read LL and HF.

Belongs to the ThiI family.

It localises to the cytoplasm. The catalysed reaction is [ThiI sulfur-carrier protein]-S-sulfanyl-L-cysteine + a uridine in tRNA + 2 reduced [2Fe-2S]-[ferredoxin] + ATP + H(+) = [ThiI sulfur-carrier protein]-L-cysteine + a 4-thiouridine in tRNA + 2 oxidized [2Fe-2S]-[ferredoxin] + AMP + diphosphate. It catalyses the reaction [ThiS sulfur-carrier protein]-C-terminal Gly-Gly-AMP + S-sulfanyl-L-cysteinyl-[cysteine desulfurase] + AH2 = [ThiS sulfur-carrier protein]-C-terminal-Gly-aminoethanethioate + L-cysteinyl-[cysteine desulfurase] + A + AMP + 2 H(+). It functions in the pathway cofactor biosynthesis; thiamine diphosphate biosynthesis. Functionally, catalyzes the ATP-dependent transfer of a sulfur to tRNA to produce 4-thiouridine in position 8 of tRNAs, which functions as a near-UV photosensor. Also catalyzes the transfer of sulfur to the sulfur carrier protein ThiS, forming ThiS-thiocarboxylate. This is a step in the synthesis of thiazole, in the thiamine biosynthesis pathway. The sulfur is donated as persulfide by IscS. The protein is Probable tRNA sulfurtransferase of Alkaliphilus oremlandii (strain OhILAs) (Clostridium oremlandii (strain OhILAs)).